The following is a 320-amino-acid chain: Adhesin MafA 1 (320 aa).

The first 18 residues, 1 to 18 (MQARLLIPILFSVFILSA), serve as a signal peptide directing secretion. The N-palmitoyl cysteine moiety is linked to residue Cys19. A lipid anchor (S-diacylglycerol cysteine) is attached at Cys19. Residues 288-320 (HMGNSAPSVEADNSHEGYGYSDEAVRRHRQGQP) form a disordered region.

The protein belongs to the MafA family.

It localises to the cell outer membrane. The chain is Adhesin MafA 1 (mafA1) from Neisseria meningitidis serogroup A / serotype 4A (strain DSM 15465 / Z2491).